Consider the following 917-residue polypeptide: DNA mismatch repair protein spellchecker 1 (917 aa).

667–674 (GPNMGGKS) provides a ligand contact to ATP.

It belongs to the DNA mismatch repair MutS family. As to quaternary structure, heterodimer of Msh2/Spel and Msh6.

Its subcellular location is the nucleus. Functionally, involved in postreplication mismatch repair. Binds specifically to DNA containing mismatched nucleotides thus providing a target for the excision repair processes characteristic of postreplication mismatch repair. In Drosophila melanogaster (Fruit fly), this protein is DNA mismatch repair protein spellchecker 1 (spel1).